A 150-amino-acid polypeptide reads, in one-letter code: 3-dehydroquinate dehydratase (150 aa).

The active-site Proton acceptor is Tyr26. The substrate site is built by Asn77, His83, and Asp90. His103 acts as the Proton donor in catalysis. Residues Leu104–Ser105 and Arg114 contribute to the substrate site.

The protein belongs to the type-II 3-dehydroquinase family. In terms of assembly, homododecamer.

The catalysed reaction is 3-dehydroquinate = 3-dehydroshikimate + H2O. Its pathway is metabolic intermediate biosynthesis; chorismate biosynthesis; chorismate from D-erythrose 4-phosphate and phosphoenolpyruvate: step 3/7. In terms of biological role, catalyzes a trans-dehydration via an enolate intermediate. This chain is 3-dehydroquinate dehydratase, found in Pectobacterium atrosepticum (strain SCRI 1043 / ATCC BAA-672) (Erwinia carotovora subsp. atroseptica).